An 88-amino-acid chain; its full sequence is Sigma-conotoxin GVIIIA (88 aa).

The signal sequence occupies residues 1–20; the sequence is MMSKMGAMFVLLLLFTLASS. A propeptide spanning residues 21-46 is cleaved from the precursor; the sequence is LQEGDVQARKTRLKSDFYRALARDDR. The residue at position 55 (Pro55) is a 4-hydroxyproline. Trp80 bears the 6'-bromotryptophan mark. Ser87 carries the serine amide modification.

This sequence belongs to the conotoxin S superfamily. Contains 5 disulfide bonds. In terms of tissue distribution, expressed by the venom duct.

It localises to the secreted. Functionally, sigma-conotoxins bind and inhibit serotonin-gated ion channels. This peptide selectively and reversibly inhibits 5-hydroxytryptamine 3 receptor (HTR3A) through competitive antagonism (IC(50)=53-86.8 nM). The sequence is that of Sigma-conotoxin GVIIIA from Conus geographus (Geography cone).